The primary structure comprises 862 residues: Short transient receptor potential channel 7 (862 aa).

A disordered region spans residues 1–21 (MLRNSTFKNMQRRHTTLREKG). The Cytoplasmic portion of the chain corresponds to 1-351 (MLRNSTFKNM…GLRQQSIAVK (351 aa)). A compositionally biased stretch (basic residues) spans 10-21 (MQRRHTTLREKG). Phosphothreonine; by PKG/PRKG1 is present on Thr15. ANK repeat units follow at residues 42-71 (PEEERFLDSAEYGNIPVVRKMLEESKTLNF), 77-106 (MGQNALQLAVGNEHLEVTELLLKKENLARV), 108-134 (DALLLAISKGYVRIVEAILNHPAFAQG), and 163-192 (HDITPIILAAHCQEYEIVHILLLKGARIER). The chain crosses the membrane as a helical span at residues 352–372 (FLAVFGVSIGLPFLAIAYWIA). Over 373 to 383 (PCSKLGRTLRS) the chain is Extracellular. A helical membrane pass occupies residues 384–404 (PFMKFVAHAVSFTIFLGLLVV). Topologically, residues 405 to 465 (NASDRFEGVK…KEIWEEGPRE (61 aa)) are cytoplasmic. Residues 466–486 (YVLHLWNLLDFGMLSIFVASF) form a helical membrane-spanning segment. Topologically, residues 487–537 (TARFMAFLKATEAQLYVDQHVQDDTLHNVSLPPEVAYFTYARDKWWPSDPQ) are extracellular. Asn514 carries an N-linked (GlcNAc...) asparagine glycan. A helical transmembrane segment spans residues 538-558 (IISEGLYAIAVVLSFSRIAYI). The Cytoplasmic segment spans residues 559–581 (LPANESFGPLQISLGRTVKDIFK). The chain crosses the membrane as a helical span at residues 582-602 (FMVIFIMVFVAFMIGMFNLYS). Topologically, residues 603–651 (YYRGAKYNPAFTTVEESFKTLFWSIFGLSEVISVVLKYDHKFIENIGYV) are extracellular. The chain crosses the membrane as a helical span at residues 652 to 672 (LYGVYNVTMVVVLLNMLIAMI). The Cytoplasmic segment spans residues 673–862 (NNSYQEIEED…HLRVNKGKDI (190 aa)).

This sequence belongs to the transient receptor (TC 1.A.4) family. STrpC subfamily. TRPC7 sub-subfamily. As to quaternary structure, interacts with MX1 and RNF24. Interacts (via ANK-repeat domains) with PRKG1. Phosphorylation by PRKG1 at Thr-15 negatively regulates TRPC7 activity.

The protein resides in the cell membrane. It localises to the nucleus envelope. It catalyses the reaction Ca(2+)(in) = Ca(2+)(out). Its function is as follows. Forms a receptor-activated non-selective calcium permeant cation channel. Probably is operated by a phosphatidylinositol second messenger system activated by receptor tyrosine kinases or G-protein coupled receptors. Activated by diacylglycerol (DAG). May also be activated by intracellular calcium store depletion. This is Short transient receptor potential channel 7 (TRPC7) from Homo sapiens (Human).